The sequence spans 417 residues: Spermidine/putrescine import ATP-binding protein PotA (417 aa).

In terms of domain architecture, ABC transporter spans 5–308; sequence IILKDLTKVF…PANRFVAQFV (304 aa). 37 to 44 provides a ligand contact to ATP; sequence GPSGCGKT. The insert stretch occupies residues 105–177; sequence DFNSKIKANL…TALKCKKINK (73 aa).

The protein belongs to the ABC transporter superfamily. Spermidine/putrescine importer (TC 3.A.1.11.1) family. As to quaternary structure, the complex is composed of two ATP-binding proteins (PotA), two transmembrane proteins (PotB and PotC) and a solute-binding protein (PotD).

The protein resides in the cell membrane. It catalyses the reaction ATP + H2O + polyamine-[polyamine-binding protein]Side 1 = ADP + phosphate + polyamineSide 2 + [polyamine-binding protein]Side 1.. Functionally, part of the ABC transporter complex PotABCD involved in spermidine/putrescine import. Responsible for energy coupling to the transport system. This is Spermidine/putrescine import ATP-binding protein PotA from Onion yellows phytoplasma (strain OY-M).